The following is a 554-amino-acid chain: Zinc finger protein 426 (554 aa).

One can recognise a KRAB domain in the interval Val42–Met112. Residues Cys146–His174 form a C2H2-type 1; atypical zinc finger. 11 C2H2-type zinc fingers span residues Phe224–His246, Tyr280–His302, Tyr308–His330, Tyr336–His358, Tyr364–His386, Phe392–His414, Cys420–His442, Tyr448–His470, Tyr476–His498, Tyr504–His526, and Tyr532–His554.

The protein resides in the nucleus. In terms of biological role, may be involved in transcriptional regulation. In Homo sapiens (Human), this protein is Zinc finger protein 426 (ZNF426).